The primary structure comprises 2178 residues: Genome polyprotein (2178 aa).

Positions 1–20 are disordered; sequence MGAQVSTQKSGSHENQNILT. G2 carries the N-myristoyl glycine; by host lipid modification. The Cytoplasmic portion of the chain corresponds to 2-1490; it reads GAQVSTQKSG…AVNQASMIIN (1489 aa). An amphipathic alpha-helix region spans residues 564-584; sequence ALTEGLSDELEEVIVEKTKQT. Catalysis depends on for protease 2A activity residues H875 and D893. Zn(2+) contacts are provided by C910 and C912. Residue C964 is the For protease 2A activity of the active site. Zn(2+) contacts are provided by C970 and H972. The interval 1100-1172 is membrane-binding; sequence NDGWFRKFND…HDSNPTQEKR (73 aa). Positions 1100-1238 are oligomerization; that stretch reads NDGWFRKFND…TPGSGKSLTT (139 aa). The segment at 1121–1125 is RNA-binding; it reads ANKIS. The SF3 helicase domain maps to 1204–1360; sequence KNKITNYMQF…STYTKNGKLN (157 aa). Zn(2+)-binding residues include C1368, C1371, C1380, and C1385. Residues 1368–1385 form a C4-type zinc finger; that stretch reads CKDCHQPSNFKKCCPLVC. Residues 1412-1419 form an RNA-binding region; sequence DYKNKVKI. The interval 1423–1428 is oligomerization; the sequence is LEVLFQ. An intramembrane segment occupies 1491–1506; sequence TILMFVSTLGIVYVIY. Topologically, residues 1507–2178 are cytoplasmic; the sequence is KLFAQTQGPY…VLRRRWLDLF (672 aa). The residue at position 1516 (Y1516) is an O-(5'-phospho-RNA)-tyrosine. Positions 1537–1714 constitute a Peptidase C3 domain; the sequence is GPNTEFALSL…FSAQLKKQYF (178 aa). Active-site for protease 3C activity residues include H1576, E1607, and C1682. One can recognise a RdRp catalytic domain in the interval 1946–2059; the sequence is HLMAFDYSNF…SYPFELDSNI (114 aa). D1951 and D2045 together coordinate Mg(2+).

It belongs to the picornaviruses polyprotein family. As to quaternary structure, interacts with capsid protein VP1 and capsid protein VP3 to form heterotrimeric protomers. Interacts with capsid protein VP0, and capsid protein VP3 to form heterotrimeric protomers. Five protomers subsequently associate to form pentamers which serve as building blocks for the capsid. Interacts with capsid protein VP2, capsid protein VP3 and capsid protein VP4 following cleavage of capsid protein VP0. In terms of assembly, interacts with capsid protein VP1 and capsid protein VP3 in the mature capsid. As to quaternary structure, interacts with capsid protein VP0 and capsid protein VP1 to form heterotrimeric protomers. Five protomers subsequently associate to form pentamers which serve as building blocks for the capsid. Interacts with capsid protein VP4 in the mature capsid. Interacts with protein 2C; this interaction may be important for virion morphogenesis. Interacts with capsid protein VP1 and capsid protein VP3. In terms of assembly, homodimer. As to quaternary structure, homohexamer; forms a hexameric ring structure with 6-fold symmetry characteristic of AAA+ ATPases. Interacts (via N-terminus) with host RTN3 (via reticulon domain); this interaction is important for viral replication. Interacts with capsid protein VP3; this interaction may be important for virion morphogenesis. Interacts with protein 3CD. In terms of assembly, homodimer. Interacts with host GBF1. Interacts (via GOLD domain) with host ACBD3 (via GOLD domain); this interaction allows the formation of a viral protein 3A/ACBD3 heterotetramer with a 2:2 stoichiometry, which will stimulate the recruitment of host PI4KB in order to synthesize PI4P at the viral RNA replication sites. As to quaternary structure, interacts with RNA-directed RNA polymerase. Interacts with protein 3AB and with RNA-directed RNA polymerase. In terms of assembly, interacts with Viral protein genome-linked and with protein 3CD. It depends on Mg(2+) as a cofactor. Specific enzymatic cleavages in vivo by the viral proteases yield processing intermediates and the mature proteins. Post-translationally, myristoylation is required for the formation of pentamers during virus assembly. Further assembly of 12 pentamers and a molecule of genomic RNA generates the provirion. In terms of processing, during virion maturation, immature virions are rendered infectious following cleavage of VP0 into VP4 and VP2. This maturation seems to be an autocatalytic event triggered by the presence of RNA in the capsid and it is followed by a conformational change infectious virion. Myristoylation is required during RNA encapsidation and formation of the mature virus particle. Post-translationally, VPg is uridylylated by the polymerase into VPg-pUpU. This acts as a nucleotide-peptide primer for the genomic RNA replication.

It localises to the virion. The protein resides in the host cytoplasm. The protein localises to the host cytoplasmic vesicle membrane. Its subcellular location is the host nucleus. It catalyses the reaction a ribonucleoside 5'-triphosphate + H2O = a ribonucleoside 5'-diphosphate + phosphate + H(+). It carries out the reaction Selective cleavage of Tyr-|-Gly bond in the picornavirus polyprotein.. The catalysed reaction is RNA(n) + a ribonucleoside 5'-triphosphate = RNA(n+1) + diphosphate. The enzyme catalyses Selective cleavage of Gln-|-Gly bond in the poliovirus polyprotein. In other picornavirus reactions Glu may be substituted for Gln, and Ser or Thr for Gly.. Its activity is regulated as follows. Replication or transcription is subject to high level of random mutations by the nucleotide analog ribavirin. Functionally, forms an icosahedral capsid of pseudo T=3 symmetry with capsid proteins VP2 and VP3. The capsid is 300 Angstroms in diameter, composed of 60 copies of each capsid protein and enclosing the viral positive strand RNA genome. Capsid protein VP1 mainly forms the vertices of the capsid. Capsid protein VP1 interacts with host cell receptor to provide virion attachment to target host cells. This attachment induces virion internalization. Tyrosine kinases are probably involved in the entry process. After binding to its receptor, the capsid undergoes conformational changes. Capsid protein VP1 N-terminus (that contains an amphipathic alpha-helix) and capsid protein VP4 are externalized. Together, they shape a pore in the host membrane through which viral genome is translocated to host cell cytoplasm. In terms of biological role, forms an icosahedral capsid of pseudo T=3 symmetry with capsid proteins VP2 and VP3. The capsid is 300 Angstroms in diameter, composed of 60 copies of each capsid protein and enclosing the viral positive strand RNA genome. Its function is as follows. Lies on the inner surface of the capsid shell. After binding to the host receptor, the capsid undergoes conformational changes. Capsid protein VP4 is released, Capsid protein VP1 N-terminus is externalized, and together, they shape a pore in the host membrane through which the viral genome is translocated into the host cell cytoplasm. Component of immature procapsids, which is cleaved into capsid proteins VP4 and VP2 after maturation. Allows the capsid to remain inactive before the maturation step. Functionally, cysteine protease that cleaves viral polyprotein and specific host proteins. It is responsible for the autocatalytic cleavage between the P1 and P2 regions, which is the first cleavage occurring in the polyprotein. Also cleaves the host translation initiation factor EIF4G1, in order to shut down the capped cellular mRNA translation. Inhibits the host nucleus-cytoplasm protein and RNA trafficking by cleaving host members of the nuclear pores. Counteracts stress granule formation probably by antagonizing its assembly or promoting its dissassembly. In terms of biological role, plays an essential role in the virus replication cycle by acting as a viroporin. Creates a pore in the host endoplasmic reticulum and as a consequence releases Ca2+ in the cytoplasm of infected cell. In turn, high levels of cytoplasmic calcium may trigger membrane trafficking and transport of viral ER-associated proteins to viroplasms, sites of viral genome replication. Its function is as follows. Induces and associates with structural rearrangements of intracellular membranes. Displays RNA-binding, nucleotide binding and NTPase activities. May play a role in virion morphogenesis and viral RNA encapsidation by interacting with the capsid protein VP3. Localizes the viral replication complex to the surface of membranous vesicles. Together with protein 3CD binds the Cis-Active RNA Element (CRE) which is involved in RNA synthesis initiation. Acts as a cofactor to stimulate the activity of 3D polymerase, maybe through a nucleid acid chaperone activity. Functionally, localizes the viral replication complex to the surface of membranous vesicles. It inhibits host cell endoplasmic reticulum-to-Golgi apparatus transport and causes the disassembly of the Golgi complex, possibly through GBF1 interaction. This would result in depletion of MHC, trail receptors and IFN receptors at the host cell surface. Plays an essential role in viral RNA replication by recruiting ACBD3 and PI4KB at the viral replication sites, thereby allowing the formation of the rearranged membranous structures where viral replication takes place. In terms of biological role, acts as a primer for viral RNA replication and remains covalently bound to viral genomic RNA. VPg is uridylylated prior to priming replication into VPg-pUpU. The oriI viral genomic sequence may act as a template for this. The VPg-pUpU is then used as primer on the genomic RNA poly(A) by the RNA-dependent RNA polymerase to replicate the viral genome. During genome replication, the VPg-RNA linkage is removed by the host TDP2, thereby accelerating replication. During the late stage of the replication cycle, host TDP2 is excluded from sites of viral RNA synthesis and encapsidation, allowing for the generation of progeny virions. Its function is as follows. Involved in the viral replication complex and viral polypeptide maturation. It exhibits protease activity with a specificity and catalytic efficiency that is different from protease 3C. Protein 3CD lacks polymerase activity. Protein 3CD binds to the 5'UTR of the viral genome. Replicates the viral genomic RNA on the surface of intracellular membranes. May form linear arrays of subunits that propagate along a strong head-to-tail interaction called interface-I. Covalently attaches UMP to a tyrosine of VPg, which is used to prime RNA synthesis. The positive stranded RNA genome is first replicated at virus induced membranous vesicles, creating a dsRNA genomic replication form. This dsRNA is then used as template to synthesize positive stranded RNA genomes. ss(+)RNA genomes are either translated, replicated or encapsidated. Functionally, major viral protease that mediates proteolytic processing of the polyprotein. Cleaves host EIF5B, contributing to host translation shutoff. Also cleaves host PABPC1, contributing to host translation shutoff. Cleaves host NLRP1, triggers host N-glycine-mediated degradation of the autoinhibitory NLRP1 N-terminal fragment. In Homo sapiens (Human), this protein is Genome polyprotein.